The following is a 133-amino-acid chain: Ribosome-binding factor A (133 aa).

It belongs to the RbfA family. Monomer. Binds 30S ribosomal subunits, but not 50S ribosomal subunits or 70S ribosomes.

It localises to the cytoplasm. One of several proteins that assist in the late maturation steps of the functional core of the 30S ribosomal subunit. Associates with free 30S ribosomal subunits (but not with 30S subunits that are part of 70S ribosomes or polysomes). Required for efficient processing of 16S rRNA. May interact with the 5'-terminal helix region of 16S rRNA. The polypeptide is Ribosome-binding factor A (Nostoc sp. (strain PCC 7120 / SAG 25.82 / UTEX 2576)).